The primary structure comprises 901 residues: HTH-type transcriptional regulator MalT (901 aa).

39–46 (SPAGYGKT) contributes to the ATP binding site. Residues 829–894 (ELIRTSPLTQ…AAVQHAQKLL (66 aa)) form the HTH luxR-type domain. The H-T-H motif DNA-binding region spans 853–872 (NEQIAGELEVAATTIKTHIR).

This sequence belongs to the MalT family. As to quaternary structure, monomer in solution. Oligomerizes to an active state in the presence of the positive effectors ATP and maltotriose.

Activated by ATP and maltotriose, which are both required for DNA binding. Functionally, positively regulates the transcription of the maltose regulon whose gene products are responsible for uptake and catabolism of malto-oligosaccharides. Specifically binds to the promoter region of its target genes, recognizing a short DNA motif called the MalT box. The sequence is that of HTH-type transcriptional regulator MalT from Escherichia coli (strain 55989 / EAEC).